We begin with the raw amino-acid sequence, 76 residues long: MYLTIEETAEYTNLSEDYIKSLVLEGKIRAVHDGEQFLIYKEQFKTHLEQLENYKALVQEILNEPIPEDIDVKDED.

This is an uncharacterized protein from Bacillus subtilis (strain 168).